Here is a 311-residue protein sequence, read N- to C-terminus: Lipoyl synthase (311 aa).

The [4Fe-4S] cluster site is built by C58, C63, C69, C84, C88, C91, and S298. In terms of domain architecture, Radical SAM core spans 70–287; that stretch reads FGHGTATFMI…EQEALAMGFR (218 aa).

This sequence belongs to the radical SAM superfamily. Lipoyl synthase family. [4Fe-4S] cluster is required as a cofactor.

It localises to the cytoplasm. The catalysed reaction is [[Fe-S] cluster scaffold protein carrying a second [4Fe-4S](2+) cluster] + N(6)-octanoyl-L-lysyl-[protein] + 2 oxidized [2Fe-2S]-[ferredoxin] + 2 S-adenosyl-L-methionine + 4 H(+) = [[Fe-S] cluster scaffold protein] + N(6)-[(R)-dihydrolipoyl]-L-lysyl-[protein] + 4 Fe(3+) + 2 hydrogen sulfide + 2 5'-deoxyadenosine + 2 L-methionine + 2 reduced [2Fe-2S]-[ferredoxin]. Its pathway is protein modification; protein lipoylation via endogenous pathway; protein N(6)-(lipoyl)lysine from octanoyl-[acyl-carrier-protein]: step 2/2. In terms of biological role, catalyzes the radical-mediated insertion of two sulfur atoms into the C-6 and C-8 positions of the octanoyl moiety bound to the lipoyl domains of lipoate-dependent enzymes, thereby converting the octanoylated domains into lipoylated derivatives. This is Lipoyl synthase from Thiobacillus denitrificans (strain ATCC 25259 / T1).